The following is a 684-amino-acid chain: Phenoloxidase 2 (684 aa).

Positions 1 to 51 (MSNTAVLNDLVALYDRPTEPMFRVKAKKSFKVPKEYVTDRFKNVAVEISNR) are cleaved as a propeptide — removed by PPAF1. N-linked (GlcNAc...) asparagine glycosylation is found at Asn81 and Asn91. The Cu cation site is built by His209, His213, and His238. Residue Asn330 is glycosylated (N-linked (GlcNAc...) asparagine). The active-site Proton acceptor is Glu350. His365, His369, and His405 together coordinate Cu cation. Asn416, Asn487, Asn491, and Asn546 each carry an N-linked (GlcNAc...) asparagine glycan. 2 cysteine pairs are disulfide-bonded: Cys581–Cys623 and Cys583–Cys630.

It belongs to the tyrosinase family. Dimer. Might form a homodimer or a heterodimer with PPO1. Might interact with PPAF2 (via CLIP domain); the interaction might be required for PPO2 activity. Cu(2+) serves as cofactor. In terms of processing, precursor cleaved by PPAF1. Hemocytes.

The protein localises to the secreted. In terms of biological role, this is a copper-containing oxidase that functions in the formation of pigments such as melanins and other polyphenolic compounds. Catalyzes the oxidation of o-diphenols (N-acetyldopamine, 4-methylcatechol and dopamine). Cannot oxidize monophenols and p-phenols (L-tyrosine, tyramine, gentisic acid and hydroquinone). Binds to the surface of hemocytes and is involved in hemocyte melanization. Activation of the enzyme in response to bacterial lipopolysaccharides (LPS) suggests it may play a role in innate immunity. The polypeptide is Phenoloxidase 2 (Holotrichia diomphalia (Korean black chafer)).